The sequence spans 154 residues: Proline dehydrogenase transcriptional activator (154 aa).

The region spanning 5-66 is the HTH asnC-type domain; sequence IDATDRRILH…MLSPIRLGLI (62 aa). Positions 24–43 form a DNA-binding region, H-T-H motif; the sequence is VTELARKVGLSKTPVAARIR.

Its function is as follows. Transcriptional activator of the putA gene in response to proline. This Rhodobacter capsulatus (Rhodopseudomonas capsulata) protein is Proline dehydrogenase transcriptional activator (putR).